A 111-amino-acid chain; its full sequence is MTNEADKFVVDVIYALPTQQKVISVSVLPGTSAIDIVRQSNMVSFFPEIELETVKLGVFSNVVKHDQVILPGQRVEIYRPLIADPKDVRRRRADKAKDEGRANKVTGGRVS.

A disordered region spans residues 88–111; it reads VRRRRADKAKDEGRANKVTGGRVS.

Belongs to the UPF0125 (RnfH) family.

This is UPF0125 protein SO_1475 from Shewanella oneidensis (strain ATCC 700550 / JCM 31522 / CIP 106686 / LMG 19005 / NCIMB 14063 / MR-1).